The following is a 102-amino-acid chain: Outer membrane protein assembly factor BamE (102 aa).

The first 20 residues, 1–20 (MNNYIKALLIIICFSSCSIS), serve as a signal peptide directing secretion.

This sequence belongs to the BamE family. Part of the Bam complex.

The protein resides in the cell outer membrane. In terms of biological role, part of the outer membrane protein assembly complex, which is involved in assembly and insertion of beta-barrel proteins into the outer membrane. This chain is Outer membrane protein assembly factor BamE, found in Buchnera aphidicola subsp. Acyrthosiphon pisum (strain APS) (Acyrthosiphon pisum symbiotic bacterium).